The sequence spans 60 residues: UPF0434 protein YcaR (60 aa).

The protein belongs to the UPF0434 family.

This chain is UPF0434 protein YcaR, found in Escherichia coli O139:H28 (strain E24377A / ETEC).